Here is a 319-residue protein sequence, read N- to C-terminus: Acetyl-coenzyme A carboxylase carboxyl transferase subunit alpha (319 aa).

A CoA carboxyltransferase C-terminal domain is found at 39 to 293; it reads RLQKKSNDLT…KAVLEKQLHE (255 aa).

Belongs to the AccA family. As to quaternary structure, acetyl-CoA carboxylase is a heterohexamer composed of biotin carboxyl carrier protein (AccB), biotin carboxylase (AccC) and two subunits each of ACCase subunit alpha (AccA) and ACCase subunit beta (AccD).

Its subcellular location is the cytoplasm. It catalyses the reaction N(6)-carboxybiotinyl-L-lysyl-[protein] + acetyl-CoA = N(6)-biotinyl-L-lysyl-[protein] + malonyl-CoA. Its pathway is lipid metabolism; malonyl-CoA biosynthesis; malonyl-CoA from acetyl-CoA: step 1/1. In terms of biological role, component of the acetyl coenzyme A carboxylase (ACC) complex. First, biotin carboxylase catalyzes the carboxylation of biotin on its carrier protein (BCCP) and then the CO(2) group is transferred by the carboxyltransferase to acetyl-CoA to form malonyl-CoA. The protein is Acetyl-coenzyme A carboxylase carboxyl transferase subunit alpha of Neisseria meningitidis serogroup C / serotype 2a (strain ATCC 700532 / DSM 15464 / FAM18).